The chain runs to 723 residues: LPS-assembly protein LptD (723 aa).

A signal peptide spans 1-23; the sequence is MNTLKLCLILYACLVLLPVRVMS.

It belongs to the LptD family. Component of the lipopolysaccharide transport and assembly complex. Interacts with LptE and LptA.

The protein localises to the cell outer membrane. Functionally, together with LptE, is involved in the assembly of lipopolysaccharide (LPS) at the surface of the outer membrane. The protein is LPS-assembly protein LptD of Nitrosomonas europaea (strain ATCC 19718 / CIP 103999 / KCTC 2705 / NBRC 14298).